The following is a 269-amino-acid chain: GATA zinc finger domain-containing protein 1 (269 aa).

The GATA-type zinc-finger motif lies at 9-33 (CSVCKTTSSSMWKKGAQGEILCHHC). The interval 63 to 115 (ATFASTSATPPQSNGGGGGKQSKQEIHRRSARLRNTKYKSAPAAEKKVSTKGK) is disordered. A Glycyl lysine isopeptide (Lys-Gly) (interchain with G-Cter in SUMO2) cross-link involves residue Lys-262.

Component of a chromatin complex, at least composed of KDM5A, GATAD1 and EMSY. Ubiquitously expressed among various tissue types. Expressed in left ventricular myocytes.

It is found in the nucleus. Its function is as follows. Component of some chromatin complex recruited to chromatin sites methylated 'Lys-4' of histone H3 (H3K4me), with a preference for trimethylated form (H3K4me3). The sequence is that of GATA zinc finger domain-containing protein 1 (GATAD1) from Homo sapiens (Human).